A 417-amino-acid polypeptide reads, in one-letter code: MRLTPLLVALFGYIYCQETFVGDQVLEVIPNDEEQIKTLLQLEAEEHLELDFWKSPSVPRQTVHVRVPFASIQDVKVFLESQGITYSIMIEDVQVLLDQEREEMLFNQQRERGTNFNFGAYHTLEEIYQEMDNLVAENPGLVSKVNIGSSFENRPMNVLKFSTGGDKPAIWLDAGIHAREWVTQATALWTANKIASDYGTDPAITSLLNTLDVFLLPVTNPDGYVFSQTSNRMWRKTRSKRSGSFCVGVDPNRNWDANFGGPGASSNPCSDSYHGPSPNSEVEVKSIVDFIKSHGKVKAFITLHSYSQLLMFPYGYKCAKPDDFNELDEVAQRAAQSLKRLHGTSYKVGPICSVIYQASGGSIDWAYDLGIKYSFAFELRDTGYYGFLLPAKQILPTAEETWLGLKTIMEHVRDHPY.

Positions 1–16 (MRLTPLLVALFGYIYC) are cleaved as a signal peptide. Positions 17–112 (QETFVGDQVL…EMLFNQQRER (96 aa)) are cleaved as a propeptide — activation peptide. Positions 120 to 412 (AYHTLEEIYQ…LGLKTIMEHV (293 aa)) constitute a Peptidase M14 domain. Zn(2+)-binding residues include H177 and E180. Substrate is bound by residues 177-180 (HARE), R235, and 252-253 (NR). C246 and C269 are joined by a disulfide. H304 contributes to the Zn(2+) binding site. 305–306 (SY) provides a ligand contact to substrate. A disulfide bond links C318 and C352. Y356 contacts substrate. The active-site Proton donor/acceptor is E378.

The protein belongs to the peptidase M14 family. It depends on Zn(2+) as a cofactor.

Its subcellular location is the secreted. The enzyme catalyses Similar to that of carboxypeptidase A (EC 3.4.17.1), but with a preference for bulkier C-terminal residues.. In terms of biological role, carboxypeptidase that catalyzes the release of a C-terminal amino acid, with a preference for large aromatic C-terminal residues. The sequence is that of Carboxypeptidase A2 (Cpa2) from Mus musculus (Mouse).